The chain runs to 247 residues: Type II restriction enzyme SmaI (247 aa).

Requires Mg(2+) as cofactor. K(+) is required as a cofactor.

It carries out the reaction Endonucleolytic cleavage of DNA to give specific double-stranded fragments with terminal 5'-phosphates.. Functionally, a P subtype restriction enzyme that recognizes the double-stranded sequence 5'-CCCGGG-3' and cleaves after C-3. The sequence is that of Type II restriction enzyme SmaI (smaIR) from Serratia marcescens.